The sequence spans 481 residues: WASH complex subunit 1 (481 aa).

A required for WASH complex assembly region spans residues 1–54 (MVRMTQKRYLEGQVYSVPLIQPDLRREEAVHQITDALQYLEMISTDIFTRVSES). Disordered stretches follow at residues 273–417 (SVPA…SGGD) and 429–481 (RRKG…DWEA). Residues 304 to 341 (APPPPPPPPPPPPEPTHVPVPPPGTSAAPPPPPPPPPM) show a composition bias toward pro residues. The tract at residues 359–481 (KGAPSEVVQP…AADDEDDWEA (123 aa)) is VCA. One can recognise a WH2 domain in the interval 371–393 (GRASLLESIRNAGGIGKANLRNV). Residues 392–407 (NVKERKMEKKKQKEQE) are compositionally biased toward basic and acidic residues.

Belongs to the WASH1 family. Component of the WASH complex.

The protein localises to the early endosome membrane. It is found in the recycling endosome membrane. Acts as a nucleation-promoting factor at the surface of endosomes, where it recruits and activates the Arp2/3 complex to induce actin polymerization, playing a key role in the fission of tubules that serve as transport intermediates during endosome sorting. The sequence is that of WASH complex subunit 1 from Danio rerio (Zebrafish).